We begin with the raw amino-acid sequence, 306 residues long: UDP-3-O-acyl-N-acetylglucosamine deacetylase (306 aa).

Positions 79, 238, and 242 each coordinate Zn(2+). His265 (proton donor) is an active-site residue.

Belongs to the LpxC family. Requires Zn(2+) as cofactor.

It catalyses the reaction a UDP-3-O-[(3R)-3-hydroxyacyl]-N-acetyl-alpha-D-glucosamine + H2O = a UDP-3-O-[(3R)-3-hydroxyacyl]-alpha-D-glucosamine + acetate. It participates in glycolipid biosynthesis; lipid IV(A) biosynthesis; lipid IV(A) from (3R)-3-hydroxytetradecanoyl-[acyl-carrier-protein] and UDP-N-acetyl-alpha-D-glucosamine: step 2/6. Functionally, catalyzes the hydrolysis of UDP-3-O-myristoyl-N-acetylglucosamine to form UDP-3-O-myristoylglucosamine and acetate, the committed step in lipid A biosynthesis. This is UDP-3-O-acyl-N-acetylglucosamine deacetylase from Hamiltonella defensa subsp. Acyrthosiphon pisum (strain 5AT).